A 367-amino-acid chain; its full sequence is uncharacterized protein (367 aa).

The FAD-binding PCMH-type domain maps to 1 to 96 (ITLHRLAELV…LTATLQLQPV (96 aa)).

It to M.tuberculosis Rv3790.

This is an uncharacterized protein from Streptomyces coelicolor.